The following is a 338-amino-acid chain: Increasing suppression factor 1 (338 aa).

The span at 50–70 (ENSSKSNNSHHSSSTNAGNTS) shows a compositional bias: low complexity. Residues 50–72 (ENSSKSNNSHHSSSTNAGNTSRH) are disordered. The residue at position 119 (Ser-119) is a Phosphoserine. The span at 267-306 (SLLSNGSSSSPLQTRNNSYSNSLVKSPSNSSLNTSVASSN) shows a compositional bias: low complexity. The interval 267–322 (SLLSNGSSSSPLQTRNNSYSNSLVKSPSNSSLNTSVASSNEESSPHTSNCLEERNP) is disordered. Polar residues predominate over residues 307–316 (EESSPHTSNC).

It belongs to the ISF1/MBR1 family.

Could influence the NAM7/UPF1 function, possibly at the level of mRNA turnover. Participates in mitochondrial biogenesis. This Saccharomyces cerevisiae (strain JAY291) (Baker's yeast) protein is Increasing suppression factor 1 (ISF1).